The sequence spans 126 residues: Aspartate 1-decarboxylase (126 aa).

Ser25 serves as the catalytic Schiff-base intermediate with substrate; via pyruvic acid. Residue Ser25 is modified to Pyruvic acid (Ser). Position 57 (Thr57) interacts with substrate. The active-site Proton donor is the Tyr58. 73–75 (GAA) serves as a coordination point for substrate.

Belongs to the PanD family. As to quaternary structure, heterooctamer of four alpha and four beta subunits. It depends on pyruvate as a cofactor. Is synthesized initially as an inactive proenzyme, which is activated by self-cleavage at a specific serine bond to produce a beta-subunit with a hydroxyl group at its C-terminus and an alpha-subunit with a pyruvoyl group at its N-terminus.

Its subcellular location is the cytoplasm. It carries out the reaction L-aspartate + H(+) = beta-alanine + CO2. Its pathway is cofactor biosynthesis; (R)-pantothenate biosynthesis; beta-alanine from L-aspartate: step 1/1. Catalyzes the pyruvoyl-dependent decarboxylation of aspartate to produce beta-alanine. The protein is Aspartate 1-decarboxylase of Nitrosococcus oceani (strain ATCC 19707 / BCRC 17464 / JCM 30415 / NCIMB 11848 / C-107).